The sequence spans 77 residues: Translation initiation factor IF-1, chloroplastic (77 aa).

The region spanning 1 to 71 (MKEQKLIHEG…TRGRIIYRLR (71 aa)) is the S1-like domain.

It belongs to the IF-1 family. As to quaternary structure, component of the 30S ribosomal translation pre-initiation complex which assembles on the 30S ribosome in the order IF-2 and IF-3, IF-1 and N-formylmethionyl-tRNA(fMet); mRNA recruitment can occur at any time during PIC assembly.

It is found in the plastid. Its subcellular location is the chloroplast. Its function is as follows. One of the essential components for the initiation of protein synthesis. Stabilizes the binding of IF-2 and IF-3 on the 30S subunit to which N-formylmethionyl-tRNA(fMet) subsequently binds. Helps modulate mRNA selection, yielding the 30S pre-initiation complex (PIC). Upon addition of the 50S ribosomal subunit IF-1, IF-2 and IF-3 are released leaving the mature 70S translation initiation complex. The polypeptide is Translation initiation factor IF-1, chloroplastic (Acorus calamus var. americanus (American sweet flag)).